The chain runs to 233 residues: MEGGGGIPLETLKEESQSRHVLPASFEVNSLQKSNWGFLLTGLVGGTLVAVYAVATPFVTPALRKVCLPFVPATTKQIENVVKMLRCRRGSLVDIGSGDGRIVIAAAKKGFTAVGYELNPWLVWYSRYRAWREGVHGSAKFYISDLWKVTFSQYSNVVIFGVPQMMLQLEKKLERELEDDARVIACRFPFPHWTPDHVTGEGIDTVWAYDASTFRGREKRPCTSMHFQLPIQA.

Methionine 1 bears the N-acetylmethionine mark. The helical transmembrane segment at 38–58 (FLLTGLVGGTLVAVYAVATPF) threads the bilayer. The tract at residues 56-90 (TPFVTPALRKVCLPFVPATTKQIENVVKMLRCRRG) is required for mitochondrial location.

It belongs to the ANT/ATPSC lysine N-methyltransferase family. In terms of tissue distribution, ubiquitously expressed.

Its subcellular location is the mitochondrion membrane. The enzyme catalyses L-lysyl-[protein] + 3 S-adenosyl-L-methionine = N(6),N(6),N(6)-trimethyl-L-lysyl-[protein] + 3 S-adenosyl-L-homocysteine + 3 H(+). Its function is as follows. Mitochondrial protein-lysine N-methyltransferase that trimethylates ATP synthase subunit C, ATP5MC1 and ATP5MC2. Trimethylation is required for proper incorporation of the C subunit into the ATP synthase complex and mitochondrial respiration. Promotes chronic pain. Involved in persistent inflammatory and neuropathic pain: methyltransferase activity in the mitochondria of sensory neurons promotes chronic pain via a pathway that depends on the production of reactive oxygen species (ROS) and on the engagement of spinal cord microglia. This Homo sapiens (Human) protein is ATP synthase subunit C lysine N-methyltransferase.